A 183-amino-acid chain; its full sequence is Oligoribonuclease (183 aa).

Residues 9–172 form the Exonuclease domain; sequence LIWIDLEMTG…DDIRESIEEL (164 aa). Y130 is a catalytic residue.

This sequence belongs to the oligoribonuclease family.

The protein localises to the cytoplasm. 3'-to-5' exoribonuclease specific for small oligoribonucleotides. This chain is Oligoribonuclease, found in Haemophilus ducreyi (strain 35000HP / ATCC 700724).